We begin with the raw amino-acid sequence, 449 residues long: UDP-N-acetylmuramoylalanine--D-glutamate ligase (449 aa).

An ATP-binding site is contributed by 118–124 (GTNGKTT).

The protein belongs to the MurCDEF family.

The protein resides in the cytoplasm. The catalysed reaction is UDP-N-acetyl-alpha-D-muramoyl-L-alanine + D-glutamate + ATP = UDP-N-acetyl-alpha-D-muramoyl-L-alanyl-D-glutamate + ADP + phosphate + H(+). The protein operates within cell wall biogenesis; peptidoglycan biosynthesis. In terms of biological role, cell wall formation. Catalyzes the addition of glutamate to the nucleotide precursor UDP-N-acetylmuramoyl-L-alanine (UMA). The chain is UDP-N-acetylmuramoylalanine--D-glutamate ligase from Staphylococcus aureus (strain MRSA252).